The following is a 266-amino-acid chain: Thymidylate synthase (266 aa).

R24 provides a ligand contact to dUMP. H54 is a binding site for (6R)-5,10-methylene-5,6,7,8-tetrahydrofolate. Residue 129 to 130 participates in dUMP binding; the sequence is RR. C149 acts as the Nucleophile in catalysis. DUMP contacts are provided by residues 169-172, N180, and 210-212; these read RSAD and HIY. Residue D172 coordinates (6R)-5,10-methylene-5,6,7,8-tetrahydrofolate. A265 is a binding site for (6R)-5,10-methylene-5,6,7,8-tetrahydrofolate.

Belongs to the thymidylate synthase family. Bacterial-type ThyA subfamily. In terms of assembly, homodimer.

It is found in the cytoplasm. The catalysed reaction is dUMP + (6R)-5,10-methylene-5,6,7,8-tetrahydrofolate = 7,8-dihydrofolate + dTMP. The protein operates within pyrimidine metabolism; dTTP biosynthesis. Functionally, catalyzes the reductive methylation of 2'-deoxyuridine-5'-monophosphate (dUMP) to 2'-deoxythymidine-5'-monophosphate (dTMP) while utilizing 5,10-methylenetetrahydrofolate (mTHF) as the methyl donor and reductant in the reaction, yielding dihydrofolate (DHF) as a by-product. This enzymatic reaction provides an intracellular de novo source of dTMP, an essential precursor for DNA biosynthesis. This is Thymidylate synthase from Corynebacterium glutamicum (strain R).